The chain runs to 385 residues: Acetate kinase (385 aa).

Asparagine 9 provides a ligand contact to Mg(2+). Lysine 16 is an ATP binding site. Residue arginine 87 participates in substrate binding. The active-site Proton donor/acceptor is the aspartate 144. ATP-binding positions include 202–206 (HLGSG) and 277–279 (DMR). Glutamate 373 is a binding site for Mg(2+).

It belongs to the acetokinase family. In terms of assembly, homodimer. It depends on Mg(2+) as a cofactor. Mn(2+) is required as a cofactor.

It is found in the cytoplasm. The catalysed reaction is acetate + ATP = acetyl phosphate + ADP. It functions in the pathway metabolic intermediate biosynthesis; acetyl-CoA biosynthesis; acetyl-CoA from acetate: step 1/2. Its function is as follows. Catalyzes the formation of acetyl phosphate from acetate and ATP. Can also catalyze the reverse reaction. The protein is Acetate kinase of Rickettsia felis (strain ATCC VR-1525 / URRWXCal2) (Rickettsia azadi).